Reading from the N-terminus, the 474-residue chain is Dol-P-Glc:Glc(2)Man(9)GlcNAc(2)-PP-Dol alpha-1,2-glucosyltransferase (474 aa).

The Cytoplasmic portion of the chain corresponds to 1-6 (MAQLEG). A helical transmembrane segment spans residues 7–27 (YYFSAALSCTFLVSCLLFSAF). The Extracellular portion of the chain corresponds to 28-64 (SRALREPYMDEIFHLPQAQRYCEGRFSLSQWDPMITT). The chain crosses the membrane as a helical span at residues 65–85 (LPGLYLVSVGVVKPASWLLGW). Residues 86–97 (SEHVICSIGVLR) are Cytoplasmic-facing. The chain crosses the membrane as a helical span at residues 98 to 118 (FVNLLFSVGNFYLLYLLFRKV). Residues 119-126 (QPRNKASS) lie on the Extracellular side of the membrane. Residues 127–147 (SIQRILSTLTLAVFPTLYFFN) traverse the membrane as a helical segment. Over 148–150 (FLY) the chain is Cytoplasmic. A helical membrane pass occupies residues 151–171 (YTEAGSVFFTLFAYLMCLYGN). Over 172–175 (HRTS) the chain is Extracellular. Residues 176 to 196 (ALLGFCGFMFRQTNIIWAAFC) form a helical membrane-spanning segment. At 197–256 (AGHLIAQKCSEAWKIELQKKKEERLAPTKGPLSELRRVLQFLLVYAMSLKNLRMLFLLTW) the chain is on the cytoplasmic side. A helical transmembrane segment spans residues 257–277 (PYVLLLLAFFAFVVVNGGIVV). The Extracellular portion of the chain corresponds to 278 to 283 (GDRSSH). A helical transmembrane segment spans residues 284-304 (EACLHFPQLFYFFSFTAFFSF). The Cytoplasmic portion of the chain corresponds to 305–317 (PHLLSLTKVKTFL). The chain crosses the membrane as a helical span at residues 318–338 (SLVWKRRVQFSVVTLVSILLV). Over 339-365 (WKFTYVHKYLLADNRHYTFYVWKRVFQ) the chain is Extracellular. The helical transmembrane segment at 366–386 (RHEVVKYLLVPAYIFAGWAIA) threads the bilayer. Topologically, residues 387–392 (DSLKAK) are cytoplasmic. A helical membrane pass occupies residues 393–413 (SIFWNLMFFVCLVASTVPQKL). The Extracellular portion of the chain corresponds to 414–436 (LEFRYFILPYIIYRLNIPLPPIS). Residues 437–457 (RLVCELGCYTVVNFVTFYIFL) form a helical membrane-spanning segment. The Cytoplasmic segment spans residues 458–473 (NKTFQWPNSQDIQRFM).

The protein belongs to the ALG10 glucosyltransferase family. As to quaternary structure, interacts with KCNH1; may regulate KCNH1, possibly by regulating its N-glycosylation. Interacts with KCNH2; may reduce KCNH2 sensitivity to classic proarrhythmic drug blockade, possibly by regulating its N-glycosylation.

The protein localises to the endoplasmic reticulum membrane. The catalysed reaction is an alpha-D-Glc-(1-&gt;3)-alpha-D-Glc-(1-&gt;3)-alpha-D-Man-(1-&gt;2)-alpha-D-Man-(1-&gt;2)-alpha-D-Man-(1-&gt;3)-[alpha-D-Man-(1-&gt;2)-alpha-D-Man-(1-&gt;3)-[alpha-D-Man-(1-&gt;2)-alpha-D-Man-(1-&gt;6)]-alpha-D-Man-(1-&gt;6)]-beta-D-Man-(1-&gt;4)-beta-D-GlcNAc-(1-&gt;4)-alpha-D-GlcNAc-diphospho-di-trans,poly-cis-dolichol + a di-trans,poly-cis-dolichyl beta-D-glucosyl phosphate = a alpha-D-Glc-(1-&gt;2)-alpha-D-Glc-(1-&gt;3)-alpha-D-Glc-(1-&gt;3)-alpha-D-Man-(1-&gt;2)-alpha-D-Man-(1-&gt;2)-alpha-D-Man-(1-&gt;3)-[alpha-D-Man-(1-&gt;2)-alpha-D-Man-(1-&gt;3)-[alpha-D-Man-(1-&gt;2)-alpha-D-Man-(1-&gt;6)]-alpha-D-Man-(1-&gt;6)]-beta-D-Man-(1-&gt;4)-beta-D-GlcNAc-(1-&gt;4)-alpha-D-GlcNAc-diphospho-di-trans,poly-cis-dolichol + a di-trans,poly-cis-dolichyl phosphate + H(+). The protein operates within protein modification; protein glycosylation. Dol-P-Glc:Glc(2)Man(9)GlcNAc(2)-PP-Dol alpha-1,2-glucosyltransferase that operates in the biosynthetic pathway of dolichol-linked oligosaccharides, the glycan precursors employed in protein asparagine (N)-glycosylation. The assembly of dolichol-linked oligosaccharides begins on the cytosolic side of the endoplasmic reticulum membrane and finishes in its lumen. The sequential addition of sugars to dolichol pyrophosphate produces dolichol-linked oligosaccharides containing fourteen sugars, including two GlcNAcs, nine mannoses and three glucoses. Once assembled, the oligosaccharide is transferred from the lipid to nascent proteins by oligosaccharyltransferases. In the lumen of the endoplasmic reticulum, adds the third and last glucose residue from dolichyl phosphate glucose (Dol-P-Glc) onto the lipid-linked oligosaccharide intermediate Glc(2)Man(9)GlcNAc(2)-PP-Dol to produce Glc(3)Man(9)GlcNAc(2)-PP-Dol. This is Dol-P-Glc:Glc(2)Man(9)GlcNAc(2)-PP-Dol alpha-1,2-glucosyltransferase from Mus musculus (Mouse).